Reading from the N-terminus, the 1231-residue chain is Fanconi anemia group J protein homolog (1231 aa).

Residues 11 to 448 (GGVKILFPCR…SDHEPLRAVC (438 aa)) form the Helicase ATP-binding domain. Residue 46–53 (SPTGSGKS) participates in ATP binding. Disordered regions lie at residues 104–126 (TFSS…GASS) and 147–166 (QDDD…DEQL). Residues 152–166 (QTDRKRIRQSHDEQL) show a composition bias toward basic and acidic residues. Positions 155–173 (RKRIRQSHDEQLQARKRRC) match the Nuclear localization signal motif. Cys-291, Cys-304, Cys-316, and Cys-356 together coordinate [4Fe-4S] cluster. The DEAH box motif lies at 399-402 (DEAH). The segment covering 890 to 903 (SKNQQQRMQMSSTN) has biased composition (polar residues). Disordered stretches follow at residues 890–924 (SKNQ…PTSS), 936–956 (VSEF…PPEI), and 1195–1231 (GNEN…FFLD). 2 stretches are compositionally biased toward low complexity: residues 909–924 (SQGT…PTSS) and 940–954 (TQPT…TSPP). Positions 1206–1217 (KGTEQKNRENRL) are enriched in basic and acidic residues.

It belongs to the DEAD box helicase family. DEAH subfamily. It depends on [4Fe-4S] cluster as a cofactor.

It localises to the nucleus. The catalysed reaction is Couples ATP hydrolysis with the unwinding of duplex DNA at the replication fork by translocating in the 5'-3' direction. This creates two antiparallel DNA single strands (ssDNA). The leading ssDNA polymer is the template for DNA polymerase III holoenzyme which synthesizes a continuous strand.. It catalyses the reaction ATP + H2O = ADP + phosphate + H(+). DNA-dependent helicase and 5' to 3' DNA helicase required for the maintenance of chromosomal stability. Involved in the repair of DNA double-strand breaks by homologous recombination. Involved in the repair of abasic sites at replication forks by promoting the degradation of DNA-protein cross-links: acts by catalyzing unfolding of HMCES DNA-protein cross-link via its helicase activity, exposing the underlying DNA and enabling cleavage of the DNA-protein adduct by the SPRTN metalloprotease. The sequence is that of Fanconi anemia group J protein homolog (brip1.L) from Xenopus laevis (African clawed frog).